Here is a 373-residue protein sequence, read N- to C-terminus: 4-hydroxy-3-methylbut-2-en-1-yl diphosphate synthase (flavodoxin) (373 aa).

4 residues coordinate [4Fe-4S] cluster: C270, C273, C305, and E312.

The protein belongs to the IspG family. It depends on [4Fe-4S] cluster as a cofactor.

The catalysed reaction is (2E)-4-hydroxy-3-methylbut-2-enyl diphosphate + oxidized [flavodoxin] + H2O + 2 H(+) = 2-C-methyl-D-erythritol 2,4-cyclic diphosphate + reduced [flavodoxin]. It functions in the pathway isoprenoid biosynthesis; isopentenyl diphosphate biosynthesis via DXP pathway; isopentenyl diphosphate from 1-deoxy-D-xylulose 5-phosphate: step 5/6. Functionally, converts 2C-methyl-D-erythritol 2,4-cyclodiphosphate (ME-2,4cPP) into 1-hydroxy-2-methyl-2-(E)-butenyl 4-diphosphate. In Klebsiella pneumoniae (strain 342), this protein is 4-hydroxy-3-methylbut-2-en-1-yl diphosphate synthase (flavodoxin).